Consider the following 432-residue polypeptide: Probable M18 family aminopeptidase 2 (432 aa).

Zn(2+)-binding residues include histidine 86, histidine 157, and histidine 408.

Belongs to the peptidase M18 family. Requires Zn(2+) as cofactor.

This is Probable M18 family aminopeptidase 2 from Streptomyces avermitilis (strain ATCC 31267 / DSM 46492 / JCM 5070 / NBRC 14893 / NCIMB 12804 / NRRL 8165 / MA-4680).